A 66-amino-acid chain; its full sequence is Large ribosomal subunit protein bL35 (66 aa).

2 stretches are compositionally biased toward basic residues: residues Met-1–Lys-15 and Ala-27–Gln-40. The segment at Met-1–Gln-40 is disordered.

It belongs to the bacterial ribosomal protein bL35 family.

The chain is Large ribosomal subunit protein bL35 from Rhodopseudomonas palustris (strain BisA53).